The chain runs to 108 residues: Large ribosomal subunit protein uL24 (108 aa).

Belongs to the universal ribosomal protein uL24 family. As to quaternary structure, part of the 50S ribosomal subunit.

In terms of biological role, one of two assembly initiator proteins, it binds directly to the 5'-end of the 23S rRNA, where it nucleates assembly of the 50S subunit. Its function is as follows. One of the proteins that surrounds the polypeptide exit tunnel on the outside of the subunit. In Mycoplasma capricolum subsp. capricolum (strain California kid / ATCC 27343 / NCTC 10154), this protein is Large ribosomal subunit protein uL24.